We begin with the raw amino-acid sequence, 75 residues long: Probable pilin MJ1469 (75 aa).

Positions 1–11 (MKPKKIISNKA) are excised as a propeptide. The QXSXEXXXL motif lies at 12-20 (QISLELALL).

The N-terminus is cleaved by the prepilin peptidase EppA, which recognizes the class III signal sequence.

It localises to the secreted. The protein resides in the cell surface. It is found in the fimbrium. This chain is Probable pilin MJ1469, found in Methanocaldococcus jannaschii (strain ATCC 43067 / DSM 2661 / JAL-1 / JCM 10045 / NBRC 100440) (Methanococcus jannaschii).